Reading from the N-terminus, the 254-residue chain is Imidazole glycerol phosphate synthase subunit HisF (254 aa).

Residues Asp12 and Asp131 contribute to the active site.

It belongs to the HisA/HisF family. In terms of assembly, heterodimer of HisH and HisF.

The protein resides in the cytoplasm. It catalyses the reaction 5-[(5-phospho-1-deoxy-D-ribulos-1-ylimino)methylamino]-1-(5-phospho-beta-D-ribosyl)imidazole-4-carboxamide + L-glutamine = D-erythro-1-(imidazol-4-yl)glycerol 3-phosphate + 5-amino-1-(5-phospho-beta-D-ribosyl)imidazole-4-carboxamide + L-glutamate + H(+). The protein operates within amino-acid biosynthesis; L-histidine biosynthesis; L-histidine from 5-phospho-alpha-D-ribose 1-diphosphate: step 5/9. Functionally, IGPS catalyzes the conversion of PRFAR and glutamine to IGP, AICAR and glutamate. The HisF subunit catalyzes the cyclization activity that produces IGP and AICAR from PRFAR using the ammonia provided by the HisH subunit. The sequence is that of Imidazole glycerol phosphate synthase subunit HisF from Herminiimonas arsenicoxydans.